Reading from the N-terminus, the 278-residue chain is RsbT co-antagonist protein RsbRD (278 aa).

The 112-residue stretch at 160–271 (SAPIMPITDG…QSLAKALANK (112 aa)) folds into the STAS domain. Threonine 181 carries the post-translational modification Phosphothreonine.

In terms of assembly, probably present in the stressosome with RsbRA, RsbRB, RsbRC and RsbS. Phosphorylated by RsbT.

Its function is as follows. One of 4 functionally non-identical RsbR paralogs, it functions in the environmental signaling branch of the general stress response. In terms of biological role, negative regulator of sigma-B activity. Non-phosphorylated RsbS binds to RsbT, preventing its association with RsbU. Requires any one of RsbRA, RsbRB, RsbRC or RsbRD to sequester RsbT. When RsbS and the RsbR paralog(s) are phosphorylated, they release RsbT, which can then bind and activate RsbU. In Bacillus subtilis (strain 168), this protein is RsbT co-antagonist protein RsbRD (rsbRD).